We begin with the raw amino-acid sequence, 268 residues long: Tryptophan synthase alpha chain (268 aa).

Catalysis depends on proton acceptor residues glutamate 49 and aspartate 60.

This sequence belongs to the TrpA family. Tetramer of two alpha and two beta chains.

It carries out the reaction (1S,2R)-1-C-(indol-3-yl)glycerol 3-phosphate + L-serine = D-glyceraldehyde 3-phosphate + L-tryptophan + H2O. The protein operates within amino-acid biosynthesis; L-tryptophan biosynthesis; L-tryptophan from chorismate: step 5/5. Functionally, the alpha subunit is responsible for the aldol cleavage of indoleglycerol phosphate to indole and glyceraldehyde 3-phosphate. The sequence is that of Tryptophan synthase alpha chain from Salmonella typhimurium (strain LT2 / SGSC1412 / ATCC 700720).